A 268-amino-acid polypeptide reads, in one-letter code: UPF0328 protein ECU09_2030 (268 aa).

The protein belongs to the UPF0328 family.

The polypeptide is UPF0328 protein ECU09_2030 (Encephalitozoon cuniculi (strain GB-M1) (Microsporidian parasite)).